The following is a 158-amino-acid chain: MFAVIKTGGKQYRIVANQVVKVEKVIGNAGDVVEFNDVLMVGQEGSAVIGTPVVADARVTAEILEQARGRKVIAFKKRRRQNSKRTRGHRQEFTTLRVLEILMGGSKPKKAAAKPIKEEATAAKGTKDTAVEKKAEKTAEKKTASQKKAAVASKSKKD.

The segment at 106 to 158 (SKPKKAAAKPIKEEATAAKGTKDTAVEKKAEKTAEKKTASQKKAAVASKSKKD) is disordered. Positions 115-143 (PIKEEATAAKGTKDTAVEKKAEKTAEKKT) are enriched in basic and acidic residues. Over residues 146–158 (QKKAAVASKSKKD) the composition is skewed to low complexity.

This sequence belongs to the bacterial ribosomal protein bL21 family. As to quaternary structure, part of the 50S ribosomal subunit. Contacts protein L20.

In terms of biological role, this protein binds to 23S rRNA in the presence of protein L20. The sequence is that of Large ribosomal subunit protein bL21 from Bartonella tribocorum (strain CIP 105476 / IBS 506).